The sequence spans 85 residues: Putative membrane protein insertion efficiency factor (85 aa).

The interval 62–85 (PLGSDGYDPVPEPKDRKPPHSPAG) is disordered.

It belongs to the UPF0161 family.

The protein resides in the cell inner membrane. In terms of biological role, could be involved in insertion of integral membrane proteins into the membrane. The sequence is that of Putative membrane protein insertion efficiency factor from Ruegeria pomeroyi (strain ATCC 700808 / DSM 15171 / DSS-3) (Silicibacter pomeroyi).